We begin with the raw amino-acid sequence, 378 residues long: Ribosomal RNA large subunit methyltransferase G (378 aa).

Belongs to the methyltransferase superfamily. RlmG family.

Its subcellular location is the cytoplasm. It carries out the reaction guanosine(1835) in 23S rRNA + S-adenosyl-L-methionine = N(2)-methylguanosine(1835) in 23S rRNA + S-adenosyl-L-homocysteine + H(+). Its function is as follows. Specifically methylates the guanine in position 1835 (m2G1835) of 23S rRNA. This is Ribosomal RNA large subunit methyltransferase G from Escherichia coli O9:H4 (strain HS).